Consider the following 181-residue polypeptide: Mating-type M-specific polypeptide Mc (181 aa).

Positions 103 to 171 (TPRPPNAFIL…QHQKMYPGYK (69 aa)) form a DNA-binding region, HMG box.

It localises to the nucleus. The protein resides in the cytoplasm. Its subcellular location is the cytoskeleton. The protein localises to the microtubule organizing center. It is found in the spindle pole body. Mating type proteins are sequence specific DNA-binding proteins that act as master switches in yeast differentiation by controlling gene expression in a cell type-specific fashion. Positive regulator of MFM genes. The HMG box recognizes the DNA sequence 5'-AACAAAG-3'. Required for conjugation and efficient meiosis. The sequence is that of Mating-type M-specific polypeptide Mc (mat3-Mc) from Schizosaccharomyces pombe (Fission yeast).